The sequence spans 129 residues: HTH-type transcriptional regulator DdrOP3 (129 aa).

The HTH cro/C1-type domain maps to 7–61 (LRELRQERGLRLKDIAGAAQISVPYLSDLERGRTNPSLETLQSLASTYGITVHDL). Positions 18–37 (LKDIAGAAQISVPYLSDLER) form a DNA-binding region, H-T-H motif.

In terms of processing, cleaved between Leu-106 and Arg-107 by the IrrE metalloprotease after exposure to radiation. Cleavage inactivates DdrOP3, leading to derepression of the target genes.

Repressor specific for genes preceded by a radiation/desiccation response motif (RDRM) site, which is present upstream of several radiation-induced genes. The chain is HTH-type transcriptional regulator DdrOP3 from Deinococcus deserti (strain DSM 17065 / CIP 109153 / LMG 22923 / VCD115).